Consider the following 119-residue polypeptide: Small capsomere-interacting protein (119 aa).

It belongs to the herpesviridae small capsomere-interacting protein family. As to quaternary structure, interacts with the major capsid protein/MCP.

It is found in the virion. It localises to the host nucleus. In terms of biological role, participates in the assembly of the infectious particles by decorating the outer surface of the capsid shell and thus forming a layer between the capsid and the tegument. Complexes composed of the major capsid protein and small capsomere-interacting protein/SCP assemble together in the host cytoplasm and are translocated to the nucleus, where they accumulate and participate in capsid assembly. This Equine herpesvirus 1 (strain V592) (EHV-1) protein is Small capsomere-interacting protein.